Here is a 723-residue protein sequence, read N- to C-terminus: 1,3-alpha-isomaltosidase (723 aa).

Catalysis depends on Asp451, which acts as the Nucleophile. Residue Glu454 is part of the active site. Catalysis depends on Asp516, which acts as the Proton donor. His581 contributes to the substrate binding site.

It belongs to the glycosyl hydrolase 31 family.

The protein localises to the cytoplasm. It catalyses the reaction cyclobis-(1-&gt;3)-alpha-D-isomaltosyl + 2 H2O = 2 isomaltose. Involved in the intracellular degradation of the cyclic tetrasaccharide cyclobis-(1-6)-alpha-nigerosyl (CNN) formed extracellularly from starch. Catalyzes the hydrolysis of the alpha-1,3-glucosidic linkage of cyclobis-(1-6)-alpha-nigerosyl (CNN) to yield isomaltose via a possible linear tetrasaccharide. It has a strong preference for the alpha-(1-3)-isomaltosyl moiety. This Kribbella flavida (strain DSM 17836 / JCM 10339 / NBRC 14399) protein is 1,3-alpha-isomaltosidase.